We begin with the raw amino-acid sequence, 230 residues long: Cytochrome c oxidase subunit 2 (230 aa).

Topologically, residues 1–29 are mitochondrial intermembrane; sequence NNFFQGYNLLFQHSLFASYMDWFHAFNCS. Residues 30 to 50 traverse the membrane as a helical segment; the sequence is LLLGVLVFVTLLFGYLIFSTF. Residues 51–63 are Mitochondrial matrix-facing; that stretch reads YFKSKKIEYQFGE. The helical transmembrane segment at 64-84 threads the bilayer; sequence LLCSIFPTIILLMQMVPSLSL. Residues 85–230 lie on the Mitochondrial intermembrane side of the membrane; sequence LYYYGLMNLD…FKSWCFGTME (146 aa). Residues His-163, Cys-198, Glu-200, Cys-202, His-206, and Met-209 each coordinate Cu cation. Mg(2+) is bound at residue Glu-200.

It belongs to the cytochrome c oxidase subunit 2 family. Component of the cytochrome c oxidase (complex IV, CIV), a multisubunit enzyme composed of a catalytic core of 3 subunits and several supernumerary subunits. The complex exists as a monomer or a dimer and forms supercomplexes (SCs) in the inner mitochondrial membrane with ubiquinol-cytochrome c oxidoreductase (cytochrome b-c1 complex, complex III, CIII). Cu cation is required as a cofactor.

Its subcellular location is the mitochondrion inner membrane. The catalysed reaction is 4 Fe(II)-[cytochrome c] + O2 + 8 H(+)(in) = 4 Fe(III)-[cytochrome c] + 2 H2O + 4 H(+)(out). In terms of biological role, component of the cytochrome c oxidase, the last enzyme in the mitochondrial electron transport chain which drives oxidative phosphorylation. The respiratory chain contains 3 multisubunit complexes succinate dehydrogenase (complex II, CII), ubiquinol-cytochrome c oxidoreductase (cytochrome b-c1 complex, complex III, CIII) and cytochrome c oxidase (complex IV, CIV), that cooperate to transfer electrons derived from NADH and succinate to molecular oxygen, creating an electrochemical gradient over the inner membrane that drives transmembrane transport and the ATP synthase. Cytochrome c oxidase is the component of the respiratory chain that catalyzes the reduction of oxygen to water. Electrons originating from reduced cytochrome c in the intermembrane space (IMS) are transferred via the dinuclear copper A center (CU(A)) of subunit 2 and heme A of subunit 1 to the active site in subunit 1, a binuclear center (BNC) formed by heme A3 and copper B (CU(B)). The BNC reduces molecular oxygen to 2 water molecules using 4 electrons from cytochrome c in the IMS and 4 protons from the mitochondrial matrix. In Caenorhabditis remanei (Caenorhabditis vulgaris), this protein is Cytochrome c oxidase subunit 2 (cox-2).